A 383-amino-acid chain; its full sequence is E3 ubiquitin-protein ligase Os04g0590900 (383 aa).

A helical transmembrane segment spans residues 53 to 73; it reads PVFSPLVIAIIGVLASAFLLV. A disordered region spans residues 105–129; that stretch reads GGAGSGGRHGHGQSRSHESWNVSPP. The segment at 157 to 199 adopts an RING-type; atypical zinc-finger fold; the sequence is CSVCLGEFSDGESLRLLPRCSHAFHQQCIDTWLKSHSNCPLCR. Disordered stretches follow at residues 269-291 and 320-383; these read EANGAAEIREEGSPPKRGASSFD and LLAG…DHPM.

The protein localises to the membrane. It carries out the reaction S-ubiquitinyl-[E2 ubiquitin-conjugating enzyme]-L-cysteine + [acceptor protein]-L-lysine = [E2 ubiquitin-conjugating enzyme]-L-cysteine + N(6)-ubiquitinyl-[acceptor protein]-L-lysine.. It functions in the pathway protein modification; protein ubiquitination. Functionally, possesses E3 ubiquitin-protein ligase in vitro. The sequence is that of E3 ubiquitin-protein ligase Os04g0590900 from Oryza sativa subsp. japonica (Rice).